A 267-amino-acid polypeptide reads, in one-letter code: NH(3)-dependent NAD(+) synthetase (267 aa).

38-45 (GISGGVDS) is an ATP binding site. Asp-44 contributes to the Mg(2+) binding site. Arg-123 lines the deamido-NAD(+) pocket. Thr-143 contributes to the ATP binding site. Glu-148 is a Mg(2+) binding site. Deamido-NAD(+) is bound by residues Lys-156 and Asp-163. Residues Lys-172 and Ser-193 each coordinate ATP. 250 to 251 (HK) is a deamido-NAD(+) binding site.

This sequence belongs to the NAD synthetase family. In terms of assembly, homodimer.

It catalyses the reaction deamido-NAD(+) + NH4(+) + ATP = AMP + diphosphate + NAD(+) + H(+). It functions in the pathway cofactor biosynthesis; NAD(+) biosynthesis; NAD(+) from deamido-NAD(+) (ammonia route): step 1/1. Its function is as follows. Catalyzes the ATP-dependent amidation of deamido-NAD to form NAD. Uses ammonia as a nitrogen source. This is NH(3)-dependent NAD(+) synthetase from Pyrobaculum aerophilum (strain ATCC 51768 / DSM 7523 / JCM 9630 / CIP 104966 / NBRC 100827 / IM2).